An 878-amino-acid chain; its full sequence is Phosphoenolpyruvate carboxylase (878 aa).

Residues His138 and Lys544 contribute to the active site.

Belongs to the PEPCase type 1 family. Mg(2+) is required as a cofactor.

It catalyses the reaction oxaloacetate + phosphate = phosphoenolpyruvate + hydrogencarbonate. In terms of biological role, forms oxaloacetate, a four-carbon dicarboxylic acid source for the tricarboxylic acid cycle. The chain is Phosphoenolpyruvate carboxylase from Psychromonas ingrahamii (strain DSM 17664 / CCUG 51855 / 37).